The primary structure comprises 462 residues: FAD-dependent monooxygenase opaC (462 aa).

N-linked (GlcNAc...) asparagine glycosylation occurs at asparagine 10. The chain crosses the membrane as a helical span at residues 14-34; it reads ITVIIIGLGIGGLTAAISCHL. Aspartate 43 is a binding site for FAD. The N-linked (GlcNAc...) asparagine glycan is linked to asparagine 60. An FAD-binding site is contributed by arginine 115. Arginine 193 is an active-site residue. FAD-binding residues include aspartate 322 and alanine 335.

The protein belongs to the paxM FAD-dependent monooxygenase family. Requires FAD as cofactor.

It is found in the membrane. The protein operates within secondary metabolite biosynthesis. FAD-dependent monooxygenase; part of the gene cluster that mediates the biosynthesis of oxepinamides, derivatives of anthranilyl-containing tripeptides that share an oxepin ring and a fused pyrimidinone moiety. The nonribosomal peptide synthetase (NRPS) opaA assembles the quinazolinone core with D-Phe incorporation. The first adenylation domain (A1) of opaA loads and activates anthranilic acid whereas the second A domain (A2) is for activating of L-Phe, which is then converted to D-form by the E domain. The third A domain (A3) is responsible for L-Ile activation and the terminal condensation domain C3 for cyclization and releasing the NRPS product protuboxepin K. The cytochrome P450 monooxygenase opaB then catalyzes alone the oxepin ring formation to convert protuboxepin K into protuboxepin A. The flavoenzyme opaC installs subsequently one hydroxyl group at the oxepin ring, accompanied by double bond migration, to form 15-epi-oxepinamide E. The epimerase opaE changes the D-Phe residue back to L-form, leading to oxepinamide E, which is further methylated at the hydroxyl group at C-12 by the O-methyltransferase OpaF to yield oxepinamide F. This chain is FAD-dependent monooxygenase opaC, found in Aspergillus ustus.